Reading from the N-terminus, the 151-residue chain is Caveolin-3 (151 aa).

The Cytoplasmic segment spans residues 1-83 (MMTEEHTDLE…RLLSTLLGVP (83 aa)). Residue K38 forms a Glycyl lysine isopeptide (Lys-Gly) (interchain with G-Cter in SUMO3) linkage. A required for interaction with DAG1 region spans residues 64–114 (TFTVSKYWCYRLLSTLLGVPLALLWGFLFACISFCHIWAVVPCIKSYLIEI). The helical intramembrane region spans 84-104 (LALLWGFLFACISFCHIWAVV). The Cytoplasmic portion of the chain corresponds to 105–151 (PCIKSYLIEIQCISHIYSLCIRTFCNPLFAALGQVCSNIKVVLRREG).

It belongs to the caveolin family. Homooligomer. Interacts with DYSF. Interacts with DLG1 and KCNA5; forms a ternary complex. Interacts with DAG1 (via its C-terminal); the interaction prevents binding of DAG1 with DMD. Interacts with TRIM72. Interacts with MUSK; may regulate MUSK signaling. Interacts with POPDC1. Interacts with CAVIN1, CAVIN2 and CAVIN4. In terms of processing, sumoylation with SUMO3 by PIAS4 may reduce agonist-induced internalization and desensitization of adrenergic receptor ABRD2. In terms of tissue distribution, expressed predominantly in muscle.

It localises to the golgi apparatus membrane. The protein resides in the cell membrane. The protein localises to the membrane. Its subcellular location is the caveola. It is found in the sarcolemma. May act as a scaffolding protein within caveolar membranes. Interacts directly with G-protein alpha subunits and can functionally regulate their activity. May also regulate voltage-gated potassium channels. Plays a role in the sarcolemma repair mechanism of both skeletal muscle and cardiomyocytes that permits rapid resealing of membranes disrupted by mechanical stress. Mediates the recruitment of CAVIN2 and CAVIN3 proteins to the caveolae. The chain is Caveolin-3 from Mus musculus (Mouse).